A 57-amino-acid chain; its full sequence is Peptide BmKa1 (57 aa).

The first 22 residues, 1-22 (MKPRVFFLLFLLVAAMIETGES), serve as a signal peptide directing secretion. 2 stretches are compositionally biased toward acidic residues: residues 20–29 (GESEENEEGS) and 45–57 (VDNEDSDIDGDSD). Residues 20-57 (GESEENEEGSNESGKSTEAKNTDASVDNEDSDIDGDSD) are disordered.

The protein belongs to the non-disulfide-bridged peptide (NDBP) superfamily. Expressed by the venom gland.

It is found in the secreted. This chain is Peptide BmKa1, found in Olivierus martensii (Manchurian scorpion).